A 473-amino-acid polypeptide reads, in one-letter code: Knob-associated histidine-rich protein (473 aa).

An N-terminal signal peptide occupies residues M1–C34. N42 carries an N-linked (GlcNAc...) asparagine glycan. Positions A57–H87 are enriched in basic residues. Disordered stretches follow at residues A57–R143 and S347–K473. Low complexity predominate over residues P95–Q104. Residues H108 to Q117 are compositionally biased toward basic residues. Composition is skewed to basic and acidic residues over residues K354–K375 and K396–K405. Over residues S406–H422 the composition is skewed to basic residues. 2 stretches are compositionally biased toward basic and acidic residues: residues K423–H444 and K453–K473.

It is found in the secreted. KAHRP might mimick human histidine-rich glycoproteins to anchor host thrombospondin or a parasite analog in a binding complex with the endothelial cell receptor. This Plasmodium falciparum protein is Knob-associated histidine-rich protein.